Consider the following 312-residue polypeptide: MSELKISPELLQISPEVQDALKNKKPVVALESTIISHGMPFPQNAQTAIEVEETIRKQGAVPATIAIIGGVMKVGLSKEEIELLGREGHNVTKVSRRDLPFVVAAGKNGATTVASTMIIAALAGIKVFATGGIGGVHRGAEHTFDISADLQELANTNVTVVCAGAKSILDLGLTTEYLETFGVPLIGYQTKALPAFFCRTSPFDVSIRLDSASEIARAMVVKWQSGLNGGLVVANPIPEQFAMPEHTINAAIDQAVAEAEAQGVIGKESTPFLLARVAELTGGDSLKSNIQLVFNNAILASEIAKEYQRLAG.

Residue glutamate 31 is the Proton donor of the active site. 2 residues coordinate substrate: lysine 93 and valine 113. Aspartate 145 serves as a coordination point for Mn(2+). 147–149 (SAD) serves as a coordination point for substrate. Lysine 166 functions as the Nucleophile in the catalytic mechanism.

Belongs to the pseudouridine-5'-phosphate glycosidase family. As to quaternary structure, homotrimer. It depends on Mn(2+) as a cofactor. Fe(2+) serves as cofactor. The cofactor is Co(2+).

The catalysed reaction is D-ribose 5-phosphate + uracil = psi-UMP + H2O. With respect to regulation, inhibited by Zn(2+) and Ni(2+). Catalyzes the reversible cleavage of pseudouridine 5'-phosphate (PsiMP) to ribose 5-phosphate and uracil. Functions biologically in the cleavage direction, as part of a pseudouridine degradation pathway. The sequence is that of Pseudouridine-5'-phosphate glycosidase from Escherichia coli (strain K12).